The primary structure comprises 290 residues: MDIEAYFERIGYQNSRNKLDLQTLTEILQHQIRAIPFENLNIHCGESMELSLETIFDQIVRKKRGGWCLQVNHLLYWALTKMGFETTMLGGYVFNTPANKYSSGMIHLLVQVTISDRNYIVDAGFGRSLQMWEPLELVSGKDHPQVPAIFRLTEENETWYLDQIRREQYVPNQAFVNSDLLEKNKYRKIYSFTLEPRTIEDFESMNTYLQTSPASVFTSKSFCSLQTPEGVHCLVGCTLTYRRFSYKDNVDLVEFKSLKEEEIEDVLKTIFGISLEKKLVPKHGDRFFTI.

Catalysis depends on cysteine 68, which acts as the Acyl-thioester intermediate. CoA is bound by residues serine 103 and glycine 104. A substrate-binding site is contributed by 106 to 107 (IH). Residues histidine 107 and aspartate 122 contribute to the active site. A CoA-binding site is contributed by tyrosine 208.

It belongs to the arylamine N-acetyltransferase family.

It localises to the cytoplasm. The catalysed reaction is an arylamine + acetyl-CoA = an N-acetylarylamine + CoA. It catalyses the reaction an N-hydroxyarylamine + acetyl-CoA = an N-acetoxyarylamine + CoA. In terms of biological role, catalyzes the N- or O-acetylation of various arylamine and heterocyclic amine substrates, and participates in the detoxification of a plethora of hydrazine and arylamine drugs. The chain is Arylamine N-acetyltransferase 2 (NAT2) from Mesocricetus auratus (Golden hamster).